A 352-amino-acid chain; its full sequence is [LysW]-L-2-aminoadipate/[LysW]-L-glutamate phosphate reductase (352 aa).

Residue 13-16 (SGYT) coordinates NADP(+). The active site involves Cys-153. Asn-319 is a binding site for NADP(+).

The protein belongs to the NAGSA dehydrogenase family. Type 1 subfamily. LysY sub-subfamily.

It localises to the cytoplasm. The enzyme catalyses [amino-group carrier protein]-C-terminal-N-(1-carboxy-5-oxopentan-1-yl)-L-glutamine + phosphate + NADP(+) = [amino-group carrier protein]-C-terminal-N-(1-carboxy-5-phosphooxy-5-oxopentan-1-yl)-L-glutamine + NADPH + H(+). The catalysed reaction is [amino-group carrier protein]-C-terminal-gamma-(L-glutamyl-5-semialdehyde)-L-glutamate + phosphate + NADP(+) = [amino-group carrier protein]-C-terminal-gamma-(5-phospho-L-glutamyl)-L-glutamate + NADPH + H(+). It participates in amino-acid biosynthesis; L-lysine biosynthesis via AAA pathway; L-lysine from L-alpha-aminoadipate (Thermus route): step 3/5. It functions in the pathway amino-acid biosynthesis; L-arginine biosynthesis. Involved in both the arginine and lysine biosynthetic pathways. This chain is [LysW]-L-2-aminoadipate/[LysW]-L-glutamate phosphate reductase, found in Saccharolobus solfataricus (strain ATCC 35092 / DSM 1617 / JCM 11322 / P2) (Sulfolobus solfataricus).